A 174-amino-acid polypeptide reads, in one-letter code: Endoribonuclease YbeY (174 aa).

3 residues coordinate Zn(2+): H124, H128, and H134.

This sequence belongs to the endoribonuclease YbeY family. Zn(2+) serves as cofactor.

The protein resides in the cytoplasm. Single strand-specific metallo-endoribonuclease involved in late-stage 70S ribosome quality control and in maturation of the 3' terminus of the 16S rRNA. This is Endoribonuclease YbeY from Synechococcus elongatus (strain ATCC 33912 / PCC 7942 / FACHB-805) (Anacystis nidulans R2).